The sequence spans 136 residues: Cytochrome c oxidase subunit 13, mitochondrial (136 aa).

Residues 1-29 constitute a mitochondrion transit peptide; it reads MFAQRQMFFARLAANLRAPAVRQTVQRRF. Topologically, residues 30–62 are mitochondrial matrix; that stretch reads ASTPANESGKNAFVREREAVKQHAAETTELWRK. A helical membrane pass occupies residues 63–83; it reads ISLYGIPPALALAGYNAYTLY. Residues 84–136 are Mitochondrial intermembrane-facing; the sequence is NEHWEHWSHLPPLEERTEYPYQNIRTRNYPWGDGDKTLFWNESVNYHNRDKVT.

Belongs to the cytochrome c oxidase subunit 6A family. As to quaternary structure, component of the cytochrome c oxidase (complex IV, CIV), a multisubunit enzyme composed of 11 subunits. The complex is composed of a catalytic core of 3 subunits Cox1, Cox2 and Cox3, encoded in the mitochondrial DNA, and 8 supernumerary subunits Cox4, Cox5a/Cox5, Cox6, Cox7, Cox8, Cox7a/Cox9, Cox6b/Cox12 and Cox6a/Cox13, which are encoded in the nuclear genome. The complex exists as a monomer or a dimer and forms respiratory supercomplexes (SCs) in the inner mitochondrial membrane with NADH-ubiquinone oxidoreductase (complex I, CI) and ubiquinol-cytochrome c oxidoreductase (cytochrome b-c1 complex, complex III, CIII), resulting in various different assemblies (supercomplexes I(1)IV(1), I(1)III(3)IV(2), III(2)IV(1) and III(2)IV(2) as well as larger supercomplexes of compositions like I(1)III(2)IV(5-6)). Cox6a/Cox13 was not present in the cryo-EM structure. It may be involved in complex IV dimer formation and might not be always expressed. This would explain its absence in the map of the isolated monomer.

The protein resides in the mitochondrion inner membrane. It functions in the pathway energy metabolism; oxidative phosphorylation. In terms of biological role, component of the cytochrome c oxidase, the last enzyme in the mitochondrial electron transport chain which drives oxidative phosphorylation. The respiratory chain contains 3 multisubunit complexes succinate dehydrogenase (complex II, CII), ubiquinol-cytochrome c oxidoreductase (cytochrome b-c1 complex, complex III, CIII) and cytochrome c oxidase (complex IV, CIV), that cooperate to transfer electrons derived from NADH and succinate to molecular oxygen, creating an electrochemical gradient over the inner membrane that drives transmembrane transport and the ATP synthase. Cytochrome c oxidase is the component of the respiratory chain that catalyzes the reduction of oxygen to water. Electrons originating from reduced cytochrome c in the intermembrane space (IMS) are transferred via the dinuclear copper A center (CU(A)) of Cox2 and heme A of Cox1 to the active site in Cox1, a binuclear center (BNC) formed by heme A3 and copper B (CU(B)). The BNC reduces molecular oxygen to 2 water molecules using 4 electrons from cytochrome c in the IMS and 4 protons from the mitochondrial matrix. In Neurospora crassa (strain ATCC 24698 / 74-OR23-1A / CBS 708.71 / DSM 1257 / FGSC 987), this protein is Cytochrome c oxidase subunit 13, mitochondrial (eat-5).